The sequence spans 250 residues: Histidine utilization repressor (250 aa).

Residues 20–88 form the HTH gntR-type domain; sequence APLYARVKQM…QGVGTFVAEP (69 aa). The H-T-H motif DNA-binding region spans 48 to 67; that stretch reads ESELVSQLGFSRMTINRALR.

Its pathway is amino-acid degradation; L-histidine degradation into L-glutamate [regulation]. Repressor which binds to the hutP region in the histidine utilization (hut) operon. It blocks the expression of all the hut genes in the absence of inducer. The polypeptide is Histidine utilization repressor (hutC) (Pseudomonas aeruginosa (strain ATCC 15692 / DSM 22644 / CIP 104116 / JCM 14847 / LMG 12228 / 1C / PRS 101 / PAO1)).